The chain runs to 375 residues: Erythronate-4-phosphate dehydrogenase (375 aa).

Residues S45 and T66 each contribute to the substrate site. The NAD(+) site is built by D146 and T175. Residue R208 is part of the active site. NAD(+) is bound at residue D232. E237 is a catalytic residue. H254 (proton donor) is an active-site residue. G257 serves as a coordination point for NAD(+). Residue Y258 coordinates substrate.

This sequence belongs to the D-isomer specific 2-hydroxyacid dehydrogenase family. PdxB subfamily. In terms of assembly, homodimer.

Its subcellular location is the cytoplasm. It carries out the reaction 4-phospho-D-erythronate + NAD(+) = (R)-3-hydroxy-2-oxo-4-phosphooxybutanoate + NADH + H(+). Its pathway is cofactor biosynthesis; pyridoxine 5'-phosphate biosynthesis; pyridoxine 5'-phosphate from D-erythrose 4-phosphate: step 2/5. Its function is as follows. Catalyzes the oxidation of erythronate-4-phosphate to 3-hydroxy-2-oxo-4-phosphonooxybutanoate. In Edwardsiella ictaluri (strain 93-146), this protein is Erythronate-4-phosphate dehydrogenase.